We begin with the raw amino-acid sequence, 613 residues long: Cysteine--tRNA ligase (613 aa).

Residues 1–130 (MSAGAGTPRR…TRGGVARSGN (130 aa)) form a disordered region. A run of 6 repeats spans residues 36–49 (PTRGDKKRARRPGV), 50–63 (PTRGDKKRAPRLGV), 64–77 (PARGDKKRARRPGV), 78–91 (PAREDKKRAPRPGV), 92–105 (PTRGDKKRAPRLGV), and 106–119 (PARGDKKRARRPGV). The interval 36-119 (PTRGDKKRAR…DKKRARRPGV (84 aa)) is 6 X 14 AA tandem repeats of P-[TA]-R-G-D-K-K-R-A-[RP]-R-[PL]-G-V. A cysteinyl-tRNA synthetase region spans residues 148–613 (VTIRLYDTSA…QGPRWSLGSR (466 aa)). Residue Cys176 participates in Zn(2+) binding. The 'HIGH' region signature appears at 178-188 (ATVQAAPHIGH). 3 residues coordinate Zn(2+): Cys355, His380, and Glu384. Residues 411 to 415 (KMSKS) carry the 'KMSKS' region motif. Lys414 serves as a coordination point for ATP.

It belongs to the class-I aminoacyl-tRNA synthetase family. Monomer. Requires Zn(2+) as cofactor.

It localises to the cytoplasm. The enzyme catalyses tRNA(Cys) + L-cysteine + ATP = L-cysteinyl-tRNA(Cys) + AMP + diphosphate. This chain is Cysteine--tRNA ligase, found in Streptomyces coelicolor (strain ATCC BAA-471 / A3(2) / M145).